The following is a 427-amino-acid chain: Phosphatidylinositol 4-phosphate 5-kinase 10 (427 aa).

Residues 1-419 form the PIPK domain; it reads MFTREITAKD…RFQDFVSQIF (419 aa). Disordered stretches follow at residues 247–287 and 334–355; these read SRGS…DSEN and MKIP…VGKQ. The interval 379 to 400 is activation loop; the sequence is YGVRKRLEHCYKSIQHSSKTIS.

It catalyses the reaction a 1,2-diacyl-sn-glycero-3-phospho-(1D-myo-inositol 4-phosphate) + ATP = a 1,2-diacyl-sn-glycero-3-phospho-(1D-myo-inositol-4,5-bisphosphate) + ADP + H(+). This chain is Phosphatidylinositol 4-phosphate 5-kinase 10 (PIP5K10), found in Arabidopsis thaliana (Mouse-ear cress).